The primary structure comprises 143 residues: UPF0299 membrane protein CGSHiEE_04225 (143 aa).

The next 4 helical transmembrane spans lie at 1–21 (MIQK…MLSL), 33–52 (VPGS…TRVI), 60–80 (GASL…VGII), and 92–112 (ILLV…GFLG).

The protein belongs to the UPF0299 family.

It is found in the cell inner membrane. In Haemophilus influenzae (strain PittEE), this protein is UPF0299 membrane protein CGSHiEE_04225.